The sequence spans 311 residues: Methionyl-tRNA formyltransferase (311 aa).

110–113 (SLLP) is a binding site for (6S)-5,6,7,8-tetrahydrofolate.

It belongs to the Fmt family.

It carries out the reaction L-methionyl-tRNA(fMet) + (6R)-10-formyltetrahydrofolate = N-formyl-L-methionyl-tRNA(fMet) + (6S)-5,6,7,8-tetrahydrofolate + H(+). In terms of biological role, attaches a formyl group to the free amino group of methionyl-tRNA(fMet). The formyl group appears to play a dual role in the initiator identity of N-formylmethionyl-tRNA by promoting its recognition by IF2 and preventing the misappropriation of this tRNA by the elongation apparatus. This chain is Methionyl-tRNA formyltransferase, found in Streptococcus pyogenes serotype M2 (strain MGAS10270).